The primary structure comprises 285 residues: MKLCGFDVGLEQRLFLIAGPCVIESAQLQMDVAGQLREITARLGMPFIFKSSFDKANRSSGSSYRGPGRDKGLEILARVRRELALPVLTDVHTEDDIAAAAQVVDVLQTPAFLCRQTDFISAAARCGKPVNIKKGQFLAPHEMHNVIDKARAAARQAGLSEDRFMACERGASFGYNNLVSDMRSLAIMRASGAPVVFDATHSVQLPGSQGSRSGGQREMVPVLARAAVAAGVAGIFMETHPDPDRALSDGPNAVPLKHMQALLETLVALDGVTKRHGFLENRFGA.

This sequence belongs to the KdsA family.

The protein resides in the cytoplasm. It carries out the reaction D-arabinose 5-phosphate + phosphoenolpyruvate + H2O = 3-deoxy-alpha-D-manno-2-octulosonate-8-phosphate + phosphate. It functions in the pathway carbohydrate biosynthesis; 3-deoxy-D-manno-octulosonate biosynthesis; 3-deoxy-D-manno-octulosonate from D-ribulose 5-phosphate: step 2/3. Its pathway is bacterial outer membrane biogenesis; lipopolysaccharide biosynthesis. The chain is 2-dehydro-3-deoxyphosphooctonate aldolase from Verminephrobacter eiseniae (strain EF01-2).